The primary structure comprises 207 residues: Guanylate kinase (207 aa).

A Guanylate kinase-like domain is found at 4–184 (GTLYIVSAPS…ALADLHTIIR (181 aa)). 11–18 (APSGAGKS) serves as a coordination point for ATP.

Belongs to the guanylate kinase family.

The protein resides in the cytoplasm. It carries out the reaction GMP + ATP = GDP + ADP. Its function is as follows. Essential for recycling GMP and indirectly, cGMP. In Photorhabdus laumondii subsp. laumondii (strain DSM 15139 / CIP 105565 / TT01) (Photorhabdus luminescens subsp. laumondii), this protein is Guanylate kinase.